Consider the following 521-residue polypeptide: Protein nucleotidyltransferase YdiU (521 aa).

Residues glycine 109, glycine 111, arginine 112, lysine 131, aspartate 143, glycine 144, arginine 194, and arginine 201 each contribute to the ATP site. Residue aspartate 270 is the Proton acceptor of the active site. Mg(2+) is bound by residues asparagine 271 and aspartate 280. Aspartate 280 lines the ATP pocket.

Belongs to the SELO family. Mg(2+) serves as cofactor. Mn(2+) is required as a cofactor.

It carries out the reaction L-seryl-[protein] + ATP = 3-O-(5'-adenylyl)-L-seryl-[protein] + diphosphate. The enzyme catalyses L-threonyl-[protein] + ATP = 3-O-(5'-adenylyl)-L-threonyl-[protein] + diphosphate. It catalyses the reaction L-tyrosyl-[protein] + ATP = O-(5'-adenylyl)-L-tyrosyl-[protein] + diphosphate. The catalysed reaction is L-histidyl-[protein] + UTP = N(tele)-(5'-uridylyl)-L-histidyl-[protein] + diphosphate. It carries out the reaction L-seryl-[protein] + UTP = O-(5'-uridylyl)-L-seryl-[protein] + diphosphate. The enzyme catalyses L-tyrosyl-[protein] + UTP = O-(5'-uridylyl)-L-tyrosyl-[protein] + diphosphate. In terms of biological role, nucleotidyltransferase involved in the post-translational modification of proteins. It can catalyze the addition of adenosine monophosphate (AMP) or uridine monophosphate (UMP) to a protein, resulting in modifications known as AMPylation and UMPylation. The protein is Protein nucleotidyltransferase YdiU of Burkholderia thailandensis (strain ATCC 700388 / DSM 13276 / CCUG 48851 / CIP 106301 / E264).